Consider the following 33-residue polypeptide: Photosystem II reaction center protein Psb30 (33 aa).

A helical transmembrane segment spans residues 5 to 25 (VILQLGSILLVVAAGPLVIVL).

It belongs to the Psb30/Ycf12 family. PSII is composed of 1 copy each of membrane proteins PsbA, PsbB, PsbC, PsbD, PsbE, PsbF, PsbH, PsbI, PsbJ, PsbK, PsbL, PsbM, PsbT, PsbX, PsbY, PsbZ, Psb30/Ycf12, peripheral proteins of the oxygen-evolving complex and a large number of cofactors. It forms dimeric complexes.

It is found in the plastid. The protein resides in the chloroplast thylakoid membrane. Functionally, a core subunit of photosystem II (PSII), probably helps stabilize the reaction center. This Oltmannsiellopsis viridis (Marine flagellate) protein is Photosystem II reaction center protein Psb30.